The primary structure comprises 136 residues: Probable endoribonuclease MazF7 (136 aa).

Residues 115–136 (TGPERGEAATHSPVRWTGGRDP) are disordered.

This sequence belongs to the PemK/MazF family. Forms a complex with cognate antitoxin MazE7.

Its function is as follows. Toxic component of a type II toxin-antitoxin (TA) system. Upon expression in E.coli and M.smegmatis inhibits cell growth and colony formation. Its toxic effect is neutralized by coexpression with cognate antitoxin MazE7. Probably an endoribonuclease. This Mycobacterium tuberculosis (strain ATCC 25618 / H37Rv) protein is Probable endoribonuclease MazF7 (mazF7).